The primary structure comprises 476 residues: Monodehydroascorbate reductase 2, peroxisomal (476 aa).

The Cytoplasmic segment spans residues 1–3 (MGR). The helical transmembrane segment at 4 to 24 (AFVHVILGGGVAAGYAALEFA) threads the bilayer. FAD is bound by residues 12–15 (GGVA), glutamate 40, arginine 47, lysine 52, and 146–147 (RN). At 25-447 (RRGGYSRGEL…GGLALGEKPT (423 aa)) the chain is on the peroxisomal side. Residues 171 to 177 (GGYIGME), glutamate 195, arginine 201, and glycine 260 each bind NAD(+). An NADP(+)-binding site is contributed by 173 to 177 (YIGME). Arginine 201 and glycine 260 together coordinate NADP(+). An FAD-binding site is contributed by aspartate 297. An NAD(+)-binding site is contributed by 314-315 (EH). 314 to 315 (EH) is an NADP(+) binding site. Position 316 (valine 316) interacts with FAD. Arginine 320 lines the L-ascorbate pocket. Residue tyrosine 346 coordinates FAD. Residue tyrosine 346 coordinates NAD(+). Tyrosine 346 contributes to the NADP(+) binding site. Arginine 348 is an L-ascorbate binding site. Residues 448–468 (YVWHATAGVIAAASIAAFGYW) form a helical membrane-spanning segment. At 469 to 476 (YGRKRRRW) the chain is on the cytoplasmic side.

Belongs to the FAD-dependent oxidoreductase family. Requires FAD as cofactor.

Its subcellular location is the peroxisome membrane. It carries out the reaction 2 monodehydro-L-ascorbate radical + NADH + H(+) = 2 L-ascorbate + NAD(+). Catalyzes the conversion of monodehydroascorbate to ascorbate, oxidizing NADH in the process. Ascorbate is a major antioxidant against reactive oxygen species (ROS) and nitric oxide (NO). This chain is Monodehydroascorbate reductase 2, peroxisomal, found in Oryza sativa subsp. japonica (Rice).